Here is a 599-residue protein sequence, read N- to C-terminus: Elongation factor 4 (599 aa).

Residues 5-187 enclose the tr-type G domain; that stretch reads SHIRNFSIIA…RLVQSIPAPE (183 aa). GTP contacts are provided by residues 17-22 and 134-137; these read DHGKST and NKMD.

It belongs to the TRAFAC class translation factor GTPase superfamily. Classic translation factor GTPase family. LepA subfamily.

The protein resides in the cell inner membrane. It catalyses the reaction GTP + H2O = GDP + phosphate + H(+). Required for accurate and efficient protein synthesis under certain stress conditions. May act as a fidelity factor of the translation reaction, by catalyzing a one-codon backward translocation of tRNAs on improperly translocated ribosomes. Back-translocation proceeds from a post-translocation (POST) complex to a pre-translocation (PRE) complex, thus giving elongation factor G a second chance to translocate the tRNAs correctly. Binds to ribosomes in a GTP-dependent manner. The polypeptide is Elongation factor 4 (Pseudomonas entomophila (strain L48)).